We begin with the raw amino-acid sequence, 499 residues long: Glycerol kinase (499 aa).

Thr-13 serves as a coordination point for ADP. Positions 13, 14, and 15 each coordinate ATP. Residue Thr-13 participates in sn-glycerol 3-phosphate binding. Arg-17 provides a ligand contact to ADP. The sn-glycerol 3-phosphate site is built by Arg-83, Glu-84, Tyr-135, and Asp-244. Glycerol-binding residues include Arg-83, Glu-84, Tyr-135, Asp-244, and Gln-245. ADP contacts are provided by Thr-266 and Gly-309. The ATP site is built by Thr-266, Gly-309, Gln-313, and Gly-410. Positions 410 and 414 each coordinate ADP.

The protein belongs to the FGGY kinase family.

The enzyme catalyses glycerol + ATP = sn-glycerol 3-phosphate + ADP + H(+). The protein operates within polyol metabolism; glycerol degradation via glycerol kinase pathway; sn-glycerol 3-phosphate from glycerol: step 1/1. Inhibited by fructose 1,6-bisphosphate (FBP). Its function is as follows. Key enzyme in the regulation of glycerol uptake and metabolism. Catalyzes the phosphorylation of glycerol to yield sn-glycerol 3-phosphate. The sequence is that of Glycerol kinase from Paraburkholderia xenovorans (strain LB400).